The following is a 148-amino-acid chain: Truncated transcription factor CAULIFLOWER D (148 aa).

An MADS-box domain is found at 1-61 (MGRGRVEMKR…GKLFEYSSES (61 aa)). The 59-residue stretch at 90-148 (QTNWSMEYSRLKAKIELWERNQRHYLGEDLESISIKELQNLEQQLDTSLKHIRSRKVCK) folds into the K-box; partial domain.

In terms of assembly, homodimer capable of binding to CArG-box sequences.

It localises to the nucleus. Functionally, probable transcription factor that promotes early floral meristem identity in synergy with APETALA1, FRUITFULL and LEAFY. Is required subsequently for the transition of an inflorescence meristem into a floral meristem. Seems to be partially redundant to the function of APETALA1. The chain is Truncated transcription factor CAULIFLOWER D (CAL-D) from Brassica oleracea var. botrytis (Cauliflower).